A 153-amino-acid polypeptide reads, in one-letter code: 6,7-dimethyl-8-ribityllumazine synthase 1 (153 aa).

5-amino-6-(D-ribitylamino)uracil-binding positions include Phe16, 47-49, and 76-78; these read ALE and MVI. A (2S)-2-hydroxy-3-oxobutyl phosphate-binding site is contributed by 81–82; the sequence is ET. His84 acts as the Proton donor in catalysis. Asn109 is a binding site for 5-amino-6-(D-ribitylamino)uracil. Residue Arg123 coordinates (2S)-2-hydroxy-3-oxobutyl phosphate.

It belongs to the DMRL synthase family.

The enzyme catalyses (2S)-2-hydroxy-3-oxobutyl phosphate + 5-amino-6-(D-ribitylamino)uracil = 6,7-dimethyl-8-(1-D-ribityl)lumazine + phosphate + 2 H2O + H(+). It participates in cofactor biosynthesis; riboflavin biosynthesis; riboflavin from 2-hydroxy-3-oxobutyl phosphate and 5-amino-6-(D-ribitylamino)uracil: step 1/2. In terms of biological role, catalyzes the formation of 6,7-dimethyl-8-ribityllumazine by condensation of 5-amino-6-(D-ribitylamino)uracil with 3,4-dihydroxy-2-butanone 4-phosphate. This is the penultimate step in the biosynthesis of riboflavin. The sequence is that of 6,7-dimethyl-8-ribityllumazine synthase 1 from Rhizobium meliloti (strain 1021) (Ensifer meliloti).